The following is a 177-amino-acid chain: Small ribosomal subunit protein uS5 (177 aa).

One can recognise an S5 DRBM domain in the interval 19–82 (FIEKLVAIKR…DQAQKQMIKV (64 aa)).

The protein belongs to the universal ribosomal protein uS5 family. In terms of assembly, part of the 30S ribosomal subunit. Contacts proteins S4 and S8.

In terms of biological role, with S4 and S12 plays an important role in translational accuracy. Functionally, located at the back of the 30S subunit body where it stabilizes the conformation of the head with respect to the body. The sequence is that of Small ribosomal subunit protein uS5 from Magnetococcus marinus (strain ATCC BAA-1437 / JCM 17883 / MC-1).